The sequence spans 233 residues: Demethylmenaquinone methyltransferase (233 aa).

S-adenosyl-L-methionine contacts are provided by residues T60, D81, and 106 to 107; that span reads DA.

It belongs to the class I-like SAM-binding methyltransferase superfamily. MenG/UbiE family.

It catalyses the reaction a 2-demethylmenaquinol + S-adenosyl-L-methionine = a menaquinol + S-adenosyl-L-homocysteine + H(+). Its pathway is quinol/quinone metabolism; menaquinone biosynthesis; menaquinol from 1,4-dihydroxy-2-naphthoate: step 2/2. In terms of biological role, methyltransferase required for the conversion of demethylmenaquinol (DMKH2) to menaquinol (MKH2). In Staphylococcus saprophyticus subsp. saprophyticus (strain ATCC 15305 / DSM 20229 / NCIMB 8711 / NCTC 7292 / S-41), this protein is Demethylmenaquinone methyltransferase.